The chain runs to 554 residues: Muellerian-inhibiting factor (554 aa).

The N-terminal stretch at methionine 1–alanine 24 is a signal peptide. The propeptide occupies valine 25–arginine 446. N-linked (GlcNAc...) asparagine glycans are attached at residues asparagine 62, asparagine 326, and asparagine 410. 3 disulfides stabilise this stretch: cysteine 456-cysteine 520, cysteine 482-cysteine 551, and cysteine 486-cysteine 553.

Belongs to the TGF-beta family. Homodimer; disulfide-linked. In terms of processing, preproprotein is proteolytically processed to generate N- and C-terminal cleavage products that homodimerize and associate to form a biologically active non-covalent complex. Binding of the non-covalent complex to AMHRII induces dissociation of the pro-region from the mature C-terminal dimer. The N-terminal portion of the protein, despite having no intrinsic activity, has the role of amplifying the activity of the C-terminus. Expressed in Sertoli cells of fetal testes, and in testes just after birth, but absent in adult testes. In female, AMH is expressed after birth in the granulosa cells of the follicle.

Its subcellular location is the secreted. Functionally, plays an important role in several reproductive functions, including Muellerian duct regression during male fetal sexua,l differentiation and in the adult plays a role in Leydig cell differentiation and function. In female acts as a negative regulator of the primordial to primary follicle transition and decreases FSH sensitivity of growing follicles. Binds to its sole type II receptor, AMHR2 that recruits type I receptors ACVR1 and BMPR1A which subsequently activates the Smad pathway. The polypeptide is Muellerian-inhibiting factor (Amh) (Mus musculus (Mouse)).